We begin with the raw amino-acid sequence, 340 residues long: Entry-fusion complex protein OPG094 (340 aa).

Gly-2 carries N-myristoyl glycine; by host lipidation. At 2–319 (GGRVSVELPK…VQHNIKHSFD (318 aa)) the chain is on the virion surface side. A helical; Signal-anchor for type II membrane protein membrane pass occupies residues 320–340 (LKLHLISLLSLLVIWILIVAI).

It belongs to the orthopoxvirus OPG086 family. As to quaternary structure, interacts with OPG143. Component of the entry fusion complex (EFC) composed of OPG053, OPG076, OPG086, OPG094, OPG095, OPG099, OPG107, OPG143, OPG104, OPG147 and OPG155. Except for OPG095 and OPG053, each of the EFC proteins is required for assembly or stability of the complex. Post-translationally, unglycosylated because produced in viral factories instead of the classic ER -Golgi route.

Its subcellular location is the virion membrane. Component of the entry fusion complex (EFC), which consists of 11 proteins. During cell infection, this complex mediates entry of the virion core into the host cytoplasm by a two-step mechanism consisting of lipid mixing of the viral and cellular membranes and subsequent pore formation. The protein is Entry-fusion complex protein OPG094 (OPG094) of Homo sapiens (Human).